A 263-amino-acid chain; its full sequence is Aminoglycoside (3'') (9) adenylyltransferase (263 aa).

The enzyme catalyses streptomycin + ATP = 3''-O-adenylylstreptomycin + diphosphate. The catalysed reaction is spectinomycin + ATP = 9-O-adenylylspectinomycin + diphosphate. Its function is as follows. Mediates bacterial resistance to the antibiotics streptomycin and spectinomycin. The polypeptide is Aminoglycoside (3'') (9) adenylyltransferase (Escherichia coli).